We begin with the raw amino-acid sequence, 824 residues long: DNA replication helicase (824 aa).

90-97 (GTAGAGKT) lines the ATP pocket.

It belongs to the herpesviridae helicase family. As to quaternary structure, associates with the primase and the primase-associated factor to form the helicase-primase complex.

The protein resides in the host nucleus. Component of the helicase/primase complex. Unwinds the DNA at the replication forks and generates single-stranded DNA for both leading and lagging strand synthesis. The primase synthesizes short RNA primers on the lagging strand that the polymerase elongates using dNTPs. Possesses helicase-like motifs and therefore may act as the helicase subunit of the complex. The polypeptide is DNA replication helicase (Human herpesvirus 6A (strain Uganda-1102) (HHV-6 variant A)).